Consider the following 312-residue polypeptide: MEIIFYHPTFNAAWWVNALEKALPHARVREWKVGDNNPADYALVWQPPVEMLAGRRLKAVFVLGAGVDAILSKLNAHPEMLDASIPLFRLEDTGMGLQMQEYAVSQVLHWFRRFDDYQALKNQALWKPLPEYTREEFSVGIMGAGVLGAKVAESLQAWGFPLRCWSRSRKSWPGVESYVGREELRAFLNQTRVLINLLPNTAQTVGIINSELLDQLPDGAYVLNLARGVHVQEADLLAALDSGKLKGAMLDVFSQEPLPQESPLWRHPRVAMTPHIAAVTRPAEAIDYISRTITQLEKGEPVTGQVDRARGY.

Arginine 227 is an active-site residue. The Proton donor role is filled by histidine 275.

Belongs to the D-isomer specific 2-hydroxyacid dehydrogenase family. GhrA subfamily.

The protein localises to the cytoplasm. The enzyme catalyses glycolate + NADP(+) = glyoxylate + NADPH + H(+). It catalyses the reaction (R)-glycerate + NAD(+) = 3-hydroxypyruvate + NADH + H(+). The catalysed reaction is (R)-glycerate + NADP(+) = 3-hydroxypyruvate + NADPH + H(+). Catalyzes the NADPH-dependent reduction of glyoxylate and hydroxypyruvate into glycolate and glycerate, respectively. The polypeptide is Glyoxylate/hydroxypyruvate reductase A (Salmonella paratyphi C (strain RKS4594)).